Reading from the N-terminus, the 240-residue chain is Uridylate kinase (240 aa).

12–15 (KLSG) serves as a coordination point for ATP. The segment at 20 to 25 (GDKGFG) is involved in allosteric activation by GTP. Position 54 (Gly-54) interacts with UMP. Gly-55 and Arg-59 together coordinate ATP. Residues Asp-74 and 135 to 142 (TGSPYFST) contribute to the UMP site. Residues Asn-163, Tyr-169, and Asp-172 each contribute to the ATP site.

The protein belongs to the UMP kinase family. Homohexamer.

The protein resides in the cytoplasm. It catalyses the reaction UMP + ATP = UDP + ADP. It participates in pyrimidine metabolism; CTP biosynthesis via de novo pathway; UDP from UMP (UMPK route): step 1/1. With respect to regulation, allosterically activated by GTP. Inhibited by UTP. In terms of biological role, catalyzes the reversible phosphorylation of UMP to UDP. This chain is Uridylate kinase, found in Limosilactobacillus reuteri (strain DSM 20016) (Lactobacillus reuteri).